A 168-amino-acid chain; its full sequence is ATP synthase F(1) complex subunit delta, mitochondrial (168 aa).

The N-terminal 22 residues, 1–22, are a transit peptide targeting the mitochondrion; the sequence is MLPASLLRHPGLRRLMLQARTY. 2 positions are modified to N6-acetyllysine; alternate: Lys-136 and Lys-165. Lys-136 and Lys-165 each carry N6-succinyllysine; alternate.

Belongs to the ATPase epsilon chain family. Component of the ATP synthase complex composed at least of ATP5F1A/subunit alpha, ATP5F1B/subunit beta, ATP5MC1/subunit c (homooctomer), MT-ATP6/subunit a, MT-ATP8/subunit 8, ATP5ME/subunit e, ATP5MF/subunit f, ATP5MG/subunit g, ATP5MK/subunit k, ATP5MJ/subunit j, ATP5F1C/subunit gamma, ATP5F1D/subunit delta, ATP5F1E/subunit epsilon, ATP5PF/subunit F6, ATP5PB/subunit b, ATP5PD/subunit d, ATP5PO/subunit OSCP. ATP synthase complex consists of a soluble F(1) head domain (subunits alpha(3) and beta(3)) - the catalytic core - and a membrane F(0) domain - the membrane proton channel (subunits c, a, 8, e, f, g, k and j). These two domains are linked by a central stalk (subunits gamma, delta, and epsilon) rotating inside the F1 region and a stationary peripheral stalk (subunits F6, b, d, and OSCP). Component of a complex composed at least by ATPIF1, ATP5F1A, ATP5F1B, ATP5F1C AND ATP5F1E.

The protein resides in the mitochondrion. It localises to the mitochondrion inner membrane. In terms of biological role, subunit delta, of the mitochondrial membrane ATP synthase complex (F(1)F(0) ATP synthase or Complex V) that produces ATP from ADP in the presence of a proton gradient across the membrane which is generated by electron transport complexes of the respiratory chain. ATP synthase complex consist of a soluble F(1) head domain - the catalytic core - and a membrane F(1) domain - the membrane proton channel. These two domains are linked by a central stalk rotating inside the F(1) region and a stationary peripheral stalk. During catalysis, ATP synthesis in the catalytic domain of F(1) is coupled via a rotary mechanism of the central stalk subunits to proton translocation. In vivo, can only synthesize ATP although its ATP hydrolase activity can be activated artificially in vitro. With the central stalk subunit gamma, is essential for the biogenesis of F(1) catalytic part of the ATP synthase complex namely in the formation of F1 assembly intermediate. The protein is ATP synthase F(1) complex subunit delta, mitochondrial of Mus musculus (Mouse).